The following is a 391-amino-acid chain: Homocysteine-responsive endoplasmic reticulum-resident ubiquitin-like domain member 1 protein (391 aa).

Met-1 is subject to N-acetylmethionine. Residues 1-263 (MESETEPEPV…VEEDDEINRD (263 aa)) are Cytoplasmic-facing. In terms of domain architecture, Ubiquitin-like spans 10–72 (VTLLVKSPNQ…LLDHQCLRDL (63 aa)). The segment at 100–126 (KVAESTEEPAGSNRGQYPEDSSSDGLR) is disordered. Residues 112–124 (NRGQYPEDSSSDG) show a composition bias toward polar residues. The segment at 115–200 (QYPEDSSSDG…ASGAFVPPPS (86 aa)) is interaction with UBQLN1. Ser-135 bears the Phosphoserine mark. Residues 264–284 (WLDWTYSAATFSVFLSILYFY) form a helical membrane-spanning segment. Topologically, residues 285 to 289 (SSLSR) are lumenal. A helical membrane pass occupies residues 290–310 (FLMVMGATVVMYLHHVGWFPF). Residues 311–391 (RPRPVQNFPN…LPEGPPAIAN (81 aa)) are Cytoplasmic-facing. Residues 318–359 (FPNDGPPPDIVNQDPNNNLQEGTDPETEDPNHVPPDRGVLDG) are disordered. A compositionally biased stretch (basic and acidic residues) spans 346–357 (DPNHVPPDRGVL).

Interacts with PSEN1 and PSEN2. Interacts with UBXN6. Interacts with UBQLN1, UBQLN2 and UBQLN4. Component of the HRD1 complex, which comprises at least SYNV1/HRD1, FAM8A1, HERPUD1/HERP, OS9, SEL1L and UBE2J1. FAM8A1 binding to SYNV1 may promote recruitment of HERPUD1 to the HRD1 complex.

Its subcellular location is the endoplasmic reticulum membrane. Component of the endoplasmic reticulum quality control (ERQC) system also called ER-associated degradation (ERAD) involved in ubiquitin-dependent degradation of misfolded endoplasmic reticulum proteins. Binds to ubiquilins and this interaction is required for efficient degradation of CD3D via the ERAD pathway. This chain is Homocysteine-responsive endoplasmic reticulum-resident ubiquitin-like domain member 1 protein (HERPUD1), found in Pongo abelii (Sumatran orangutan).